The chain runs to 342 residues: Succinylglutamate desuccinylase (342 aa).

Residues histidine 63, glutamate 66, and histidine 155 each coordinate Zn(2+). Residue glutamate 219 is part of the active site.

The protein belongs to the AspA/AstE family. Succinylglutamate desuccinylase subfamily. The cofactor is Zn(2+).

It catalyses the reaction N-succinyl-L-glutamate + H2O = L-glutamate + succinate. It participates in amino-acid degradation; L-arginine degradation via AST pathway; L-glutamate and succinate from L-arginine: step 5/5. Its function is as follows. Transforms N(2)-succinylglutamate into succinate and glutamate. The protein is Succinylglutamate desuccinylase of Vibrio vulnificus (strain CMCP6).